We begin with the raw amino-acid sequence, 214 residues long: DNA-directed RNA polymerase subunit alpha (214 aa).

This sequence belongs to the RNA polymerase alpha chain family. As to quaternary structure, in plastids the minimal PEP RNA polymerase catalytic core is composed of four subunits: alpha, beta, beta', and beta''. When a (nuclear-encoded) sigma factor is associated with the core the holoenzyme is formed, which can initiate transcription.

It is found in the plastid. It localises to the chloroplast. It catalyses the reaction RNA(n) + a ribonucleoside 5'-triphosphate = RNA(n+1) + diphosphate. DNA-dependent RNA polymerase catalyzes the transcription of DNA into RNA using the four ribonucleoside triphosphates as substrates. This chain is DNA-directed RNA polymerase subunit alpha (rpoA), found in Euglena viridis (Cercaria viridis).